Reading from the N-terminus, the 1047-residue chain is MALPSLLLVVAALAGGVRPPGARNLTLAVVLPEHNLSYAWAWPRVGPAVALAVEALGRALPVDLRFVSSELDGACSEYLAPLRAVDLKLYHDPDLLLGPGCVYPAASVARFASHWRLPLLTAGAVASGFAAKNEHYRTLVRTGPSAPKLGEFVVTLHGHFNWTARAALLYLDARTDDRPHYFTIEGVFEALQGSNLSVQHQVYAREPGGPEQATHFIRANGRIVYICGPLEMLHEILLQAQRENLTNGDYVFFYLDVFGESLRAGPTRATGRPWQDNRTQEQAQALREAFQTVLVITYREPPNPEYQEFQNRLLIRAREDFGVELAPSLMNLIAGCFYDGILLYAQVLNETIQEGGTREDGLRIVEKMQGRRYHGVTGLVVMDKNNDRETDFVLWAMGDLDSGDFQPAAHYSGAEKQIWWTGRPIPWVKGAPPLDNPPCAFDLDDPSCDKTPLSTLAIVALGTGVTFIMFGVSSFLIFRKLMLEKELASMLWRIRWEELQFGNSDRYHKGAGSRLTLSLRGSSYGSLMTAHGKYQIFANTGHFKGNVVAIKHVNKKRIELTRQVLFELKHMRDVQFNHLTRFIGACIDPPNICIVTEYCPRGSLQDILENDSINLDWMFRYSLINDLVKGMAFLHNSIISSHGSLKSSNCVVDSRFVLKITDYGLASFRSTAEPDDSHALYAKKLWTAPELLSGNPLPTTGMQKADVYSFAIILQEIALRSGPFYLEGLDLSPKEIVQKVRNGQRPYFRPSIDRTQLNEELVLLMERCWAQDPTERPDFGQIKGFIRRFNKEGGTSILDNLLLRMEQYANNLEKLVEERTQAYLEEKRKAEALLYQILPHSVAEQLKRGETVQAEAFDSVTIYFSDIVGFTALSAESTPMQVVTLLNDLYTCFDAIIDNFDVYKVETIGDAYMVVSGLPGRNGQRHAPEIARMALALLDAVSSFRIRHRPHDQLRLRIGVHTGPVCAGVVGLKMPRYCLFGDTVNTASRMESNGQALKIHVSSTTKDALDELGCFQLELRGDVEMKGKGKMRTYWLLGEQKGPPGLL.

Residues 1–16 form the signal peptide; sequence MALPSLLLVVAALAGG. Residues 17-458 lie on the Extracellular side of the membrane; sequence VRPPGARNLT…DKTPLSTLAI (442 aa). 2 N-linked (GlcNAc...) asparagine glycosylation sites follow: N24 and N35. Residues C75 and C101 are joined by a disulfide bond. Residues N161, N195, N244, N277, and N349 are each glycosylated (N-linked (GlcNAc...) asparagine). The chain crosses the membrane as a helical span at residues 459–478; it reads VALGTGVTFIMFGVSSFLIF. Residues 479-1047 are Cytoplasmic-facing; sequence RKLMLEKELA…GEQKGPPGLL (569 aa). At S513 the chain carries Phosphoserine. Residues 513–786 enclose the Protein kinase domain; the sequence is SRLTLSLRGS…PDFGQIKGFI (274 aa). T516 is subject to Phosphothreonine. 4 positions are modified to phosphoserine: S518, S522, S523, and S526. The residue at position 529 (T529) is a Phosphothreonine. The Guanylate cyclase domain occupies 861-991; the sequence is TIYFSDIVGF…DTVNTASRME (131 aa).

This sequence belongs to the adenylyl cyclase class-4/guanylyl cyclase family. In terms of processing, phosphorylated. Phosphorylation of the protein kinase-like domain is required for full activation by CNP. Glycosylated. Widely expressed. Expressed in the columnar proliferating and prehypertrophic chondrocyte layers of the tibia.

It is found in the cell membrane. The catalysed reaction is GTP = 3',5'-cyclic GMP + diphosphate. Receptor for the C-type natriuretic peptide NPPC/CNP hormone. Has guanylate cyclase activity upon binding of its ligand. May play a role in the regulation of skeletal growth. The sequence is that of Atrial natriuretic peptide receptor 2 (Npr2) from Mus musculus (Mouse).